The primary structure comprises 690 residues: Glycine--tRNA ligase beta subunit (690 aa).

The protein belongs to the class-II aminoacyl-tRNA synthetase family. As to quaternary structure, tetramer of two alpha and two beta subunits.

Its subcellular location is the cytoplasm. The catalysed reaction is tRNA(Gly) + glycine + ATP = glycyl-tRNA(Gly) + AMP + diphosphate. The chain is Glycine--tRNA ligase beta subunit from Proteus mirabilis (strain HI4320).